Reading from the N-terminus, the 360-residue chain is Arginase, non-hepatic 1 (360 aa).

Mn(2+)-binding residues include His-122, Asp-145, His-147, and Asp-149. Substrate-binding positions include 147 to 151 (HADIN), 158 to 160 (SGN), and Asp-204. Mn(2+)-binding residues include Asp-253 and Asp-255. The substrate site is built by Thr-267 and Glu-298.

It belongs to the arginase family. Homotrimer. Mn(2+) serves as cofactor. In terms of tissue distribution, expressed at differing tadpole stages in tail, intestine, hindlimb and trunk region. Most abundant in tadpole tail.

The enzyme catalyses L-arginine + H2O = urea + L-ornithine. It participates in nitrogen metabolism; urea cycle; L-ornithine and urea from L-arginine: step 1/1. In terms of biological role, as well as its role in the urea cycle, may be involved in tissue remodeling. This chain is Arginase, non-hepatic 1 (arg2-a), found in Xenopus laevis (African clawed frog).